The primary structure comprises 632 residues: tRNA uridine 5-carboxymethylaminomethyl modification enzyme MnmG (632 aa).

FAD contacts are provided by residues 15–20, Ile127, and Ser182; that span reads GAGHAG. 276–290 lines the NAD(+) pocket; sequence GPRYCPSIEDKIVRF. Gln373 serves as a coordination point for FAD.

The protein belongs to the MnmG family. Homodimer. Heterotetramer of two MnmE and two MnmG subunits. FAD is required as a cofactor.

It is found in the cytoplasm. In terms of biological role, NAD-binding protein involved in the addition of a carboxymethylaminomethyl (cmnm) group at the wobble position (U34) of certain tRNAs, forming tRNA-cmnm(5)s(2)U34. The chain is tRNA uridine 5-carboxymethylaminomethyl modification enzyme MnmG from Streptococcus pyogenes serotype M4 (strain MGAS10750).